Reading from the N-terminus, the 419-residue chain is Histidine--tRNA ligase (419 aa).

It belongs to the class-II aminoacyl-tRNA synthetase family. Homodimer.

It is found in the cytoplasm. The catalysed reaction is tRNA(His) + L-histidine + ATP = L-histidyl-tRNA(His) + AMP + diphosphate + H(+). This chain is Histidine--tRNA ligase, found in Desulfatibacillum aliphaticivorans.